The following is a 210-amino-acid chain: Probable GTP-binding protein EngB (210 aa).

The EngB-type G domain maps to 25 to 199 (TGIEVAFAGR…RQKLDTWFSE (175 aa)). Residues 33–40 (GRSNAGKS), 60–64 (GRTQL), 78–81 (DLPG), 145–148 (TKAD), and 178–180 (FSS) each bind GTP. Residues S40 and T62 each coordinate Mg(2+).

This sequence belongs to the TRAFAC class TrmE-Era-EngA-EngB-Septin-like GTPase superfamily. EngB GTPase family. It depends on Mg(2+) as a cofactor.

Its function is as follows. Necessary for normal cell division and for the maintenance of normal septation. The chain is Probable GTP-binding protein EngB from Escherichia coli O6:H1 (strain CFT073 / ATCC 700928 / UPEC).